The sequence spans 227 residues: UPF0758 protein CPE2144 (227 aa).

One can recognise an MPN domain in the interval 105–227 (KISKPSDVAK…FISLKEKDIL (123 aa)). H176, H178, and D189 together coordinate Zn(2+). Positions 176–189 (HNHPSGDPTPSRDD) match the JAMM motif motif.

The protein belongs to the UPF0758 family.

This chain is UPF0758 protein CPE2144, found in Clostridium perfringens (strain 13 / Type A).